The following is a 205-amino-acid chain: Isochorismatase domain-containing protein 2 (205 aa).

2 positions are modified to phosphoserine: serine 7 and serine 202.

Belongs to the isochorismatase family. As to quaternary structure, interacts with CDKN2A.

It is found in the cytoplasm. Its subcellular location is the nucleus. This Pongo abelii (Sumatran orangutan) protein is Isochorismatase domain-containing protein 2 (ISOC2).